The chain runs to 511 residues: ATP synthase subunit alpha (511 aa).

169 to 176 (GDRQTGKT) contributes to the ATP binding site.

This sequence belongs to the ATPase alpha/beta chains family. In terms of assembly, F-type ATPases have 2 components, CF(1) - the catalytic core - and CF(0) - the membrane proton channel. CF(1) has five subunits: alpha(3), beta(3), gamma(1), delta(1), epsilon(1). CF(0) has three main subunits: a(1), b(2) and c(9-12). The alpha and beta chains form an alternating ring which encloses part of the gamma chain. CF(1) is attached to CF(0) by a central stalk formed by the gamma and epsilon chains, while a peripheral stalk is formed by the delta and b chains.

It is found in the cell inner membrane. The enzyme catalyses ATP + H2O + 4 H(+)(in) = ADP + phosphate + 5 H(+)(out). In terms of biological role, produces ATP from ADP in the presence of a proton gradient across the membrane. The alpha chain is a regulatory subunit. The chain is ATP synthase subunit alpha from Bartonella tribocorum (strain CIP 105476 / IBS 506).